A 330-amino-acid polypeptide reads, in one-letter code: MQTLAQHLTSQAVNDSLSQLILTLADTSKAISHAVRHGALAGVLGATEQENVQGETQKKLDIITNDMLKDALKADGTVRGLASEEEDHVVEVSTNGQYLVCFDPLDGSSNIDINSLVGTIFSILPASAGELTETSFLQSGRNQLAAGYVLYGPSTMLALTTGQGVQLFTLHPETNEFLLTNAAMSISADTQEFAINMSNQRFWEAPMQTYIADLLLGKIGPREKSFNMRWIAAMVGDVHRVLSRGGIFTYPTDNKDPKKPYKLRLMYEANPMAFLVEQAGGKASTGYETILDIQPTQIHQRVAVILGSSNEVDACLSYHGLDYSEEPSLD.

The Mg(2+) site is built by E84, D103, L105, and D106. Substrate is bound by residues 106–109, N196, and K262; that span reads DGSS. Position 268 (E268) interacts with Mg(2+).

The protein belongs to the FBPase class 1 family. Homotetramer. The cofactor is Mg(2+).

It is found in the cytoplasm. The catalysed reaction is beta-D-fructose 1,6-bisphosphate + H2O = beta-D-fructose 6-phosphate + phosphate. The protein operates within carbohydrate biosynthesis; gluconeogenesis. The protein is Fructose-1,6-bisphosphatase class 1 of Shewanella putrefaciens (strain CN-32 / ATCC BAA-453).